Consider the following 98-residue polypeptide: C-X-C motif chemokine 10 (98 aa).

An N-terminal signal peptide occupies residues Met-1 to Gly-21. Position 26 is a citrulline (Arg-26). 2 disulfides stabilise this stretch: Cys-30/Cys-57 and Cys-32/Cys-74.

This sequence belongs to the intercrine alpha (chemokine CxC) family. Monomer, dimer, and tetramer. Interacts with CXCR3 (via N-terminus).

It localises to the secreted. Functionally, pro-inflammatory cytokine that is involved in a wide variety of processes such as chemotaxis, differentiation, and activation of peripheral immune cells, regulation of cell growth, apoptosis and modulation of angiostatic effects. Plays thereby an important role during viral infections by stimulating the activation and migration of immune cells to the infected sites. Mechanistically, binding of CXCL10 to the CXCR3 receptor activates G protein-mediated signaling and results in downstream activation of phospholipase C-dependent pathway, an increase in intracellular calcium production and actin reorganization. In turn, recruitment of activated Th1 lymphocytes occurs at sites of inflammation. Activation of the CXCL10/CXCR3 axis also plays an important role in neurons in response to brain injury for activating microglia, the resident macrophage population of the central nervous system, and directing them to the lesion site. This recruitment is an essential element for neuronal reorganization. The chain is C-X-C motif chemokine 10 (CXCL10) from Canis lupus familiaris (Dog).